The chain runs to 302 residues: Acetaldehyde dehydrogenase 2 (302 aa).

Cys-130 functions as the Acyl-thioester intermediate in the catalytic mechanism. NAD(+) is bound by residues 161–169 (SVGPGTRRN) and Asn-272.

Belongs to the acetaldehyde dehydrogenase family.

The enzyme catalyses acetaldehyde + NAD(+) + CoA = acetyl-CoA + NADH + H(+). In Cupriavidus necator (strain ATCC 17699 / DSM 428 / KCTC 22496 / NCIMB 10442 / H16 / Stanier 337) (Ralstonia eutropha), this protein is Acetaldehyde dehydrogenase 2.